A 359-amino-acid polypeptide reads, in one-letter code: Phospho-N-acetylmuramoyl-pentapeptide-transferase (359 aa).

10 helical membrane passes run 26-46, 73-93, 98-118, 134-154, 166-186, 197-217, 234-254, 261-281, 286-306, and 338-358; these read TIYGGLTAFLICFLLGPWVIN, TMGGILILFSLGVSTLLWADL, ILITLLSMLLFGAIGFIDDYL, FLVQIMAGLVISYLVYLCPDF, FTPDLGIWYIPFATLVIVGTS, GLAIGPIIIAGVTYMIFAYVA, CGEITIVCGILAGAGLGFLWF, VFMGDTGSIPLGAILGTIAVI, ILLLVVGGLFVIEALSVIIQV, and IVRFWIIAITLALISLSTLKI.

It belongs to the glycosyltransferase 4 family. MraY subfamily. The cofactor is Mg(2+).

It localises to the cell inner membrane. The enzyme catalyses UDP-N-acetyl-alpha-D-muramoyl-L-alanyl-gamma-D-glutamyl-meso-2,6-diaminopimeloyl-D-alanyl-D-alanine + di-trans,octa-cis-undecaprenyl phosphate = di-trans,octa-cis-undecaprenyl diphospho-N-acetyl-alpha-D-muramoyl-L-alanyl-D-glutamyl-meso-2,6-diaminopimeloyl-D-alanyl-D-alanine + UMP. It participates in cell wall biogenesis; peptidoglycan biosynthesis. In terms of biological role, catalyzes the initial step of the lipid cycle reactions in the biosynthesis of the cell wall peptidoglycan: transfers peptidoglycan precursor phospho-MurNAc-pentapeptide from UDP-MurNAc-pentapeptide onto the lipid carrier undecaprenyl phosphate, yielding undecaprenyl-pyrophosphoryl-MurNAc-pentapeptide, known as lipid I. The protein is Phospho-N-acetylmuramoyl-pentapeptide-transferase of Desulforapulum autotrophicum (strain ATCC 43914 / DSM 3382 / VKM B-1955 / HRM2) (Desulfobacterium autotrophicum).